The sequence spans 1189 residues: Magnesium-chelatase subunit H (1189 aa).

Belongs to the Mg-chelatase subunit H family.

The enzyme catalyses protoporphyrin IX + Mg(2+) + ATP + H2O = Mg-protoporphyrin IX + ADP + phosphate + 3 H(+). It functions in the pathway porphyrin-containing compound metabolism; bacteriochlorophyll biosynthesis (light-independent). Its function is as follows. Involved in bacteriochlorophyll pigment biosynthesis; introduces a magnesium ion into protoporphyrin IX to yield Mg-protoroporphyrin IX. The polypeptide is Magnesium-chelatase subunit H (bchH) (Rhodobacter capsulatus (strain ATCC BAA-309 / NBRC 16581 / SB1003)).